Here is a 583-residue protein sequence, read N- to C-terminus: MKLLHVFLLFLCFHLSFCKVTYTSQEDLVEKKCLAKKHTHLSCNKVFCQPWQICIEGTCICKLPYQCPKNGTTVCATNGRSFPTYCQQKSLECLRPGTKFLNNGTCTAEGKFSVSLKHGNTDSEGIVEVKLVDQDKTMFICKSSWSMREANVACLDLGFQQGADTQRRFKLSNLSINSTECLHVHCRGLETSLAECTFTKRRTMGYQDLADVVCYTQKADSPTNDFFQCVNGKYISQMKACDGINDCGDQSDELCCKACQGKSFHCKSGVCIPSQYRCNGEVDCITGEDEVGCEGFASVAQEETEILTADMDAERRRIKSLLPKLSCGVKNRRHIRRKRIVGGKRAQLGDLPWQVGIKDASGITCGGIYIGGCWILTAAHCLRASKTHHYQIWTTVVDWIHPDRKRIVIEYVDRIIFHENYNAGTYQNDIALMEMKKDGNKKDCELPRSIPACVPWSPYLFQPNDTCIVSGWGREKDNEKVFSLQWGEVKLISNCSKFYGNRFYEKEMECAGTYDGSIDACKGDSGGPLVCMDANNVTYVWGVVSWGENCGKPEFPGVYTKVANYFDWISYHVGRPFISQYNV.

The N-terminal stretch at 1 to 18 is a signal peptide; it reads MKLLHVFLLFLCFHLSFC. 16 cysteine pairs are disulfide-bonded: Cys-33-Cys-255, Cys-43-Cys-54, Cys-48-Cys-59, Cys-61-Cys-93, Cys-67-Cys-86, Cys-75-Cys-106, Cys-141-Cys-181, Cys-154-Cys-214, Cys-186-Cys-196, Cys-229-Cys-247, Cys-259-Cys-271, Cys-266-Cys-284, Cys-278-Cys-293, Cys-327-Cys-453, Cys-365-Cys-381, and Cys-373-Cys-444. Positions 55 to 108 constitute a Kazal-like domain; sequence IEGTCICKLPYQCPKNGTTVCATNGRSFPTYCQQKSLECLRPGTKFLNNGTCTA. N-linked (GlcNAc...) asparagine glycosylation is found at Asn-70, Asn-103, Asn-173, and Asn-177. The 99-residue stretch at 114–212 folds into the SRCR domain; that stretch reads VSLKHGNTDS…TMGYQDLADV (99 aa). 2 LDL-receptor class A domains span residues 213–257 and 258–294; these read VCYT…LCCK and ACQG…VGCE. Positions 239, 242, 244, 246, 252, and 253 each coordinate Ca(2+). Tyr-276, Asn-279, Glu-281, Asp-283, Asp-289, and Glu-290 together coordinate Ca(2+). Residues 340 to 574 enclose the Peptidase S1 domain; sequence IVGGKRAQLG…YFDWISYHVG (235 aa). Active-site charge relay system residues include His-380 and Asp-429. N-linked (GlcNAc...) asparagine glycans are attached at residues Asn-464 and Asn-494. Intrachain disulfides connect Cys-467–Cys-531, Cys-495–Cys-510, and Cys-521–Cys-550. The active-site Charge relay system is Ser-525. Residue Asn-536 is glycosylated (N-linked (GlcNAc...) asparagine).

Belongs to the peptidase S1 family. Heterodimer of a light and heavy chains; disulfide-linked. The fully processed and mature protein circulates as a zymogen, and is allosterically activated by substrate-induced remodeling of the active site. Plasma.

The protein resides in the secreted. Its subcellular location is the extracellular space. It carries out the reaction Inactivates complement subcomponents C3b, iC3b and C4b by proteolytic cleavage.. Its function is as follows. Responsible for cleaving the alpha-chains of C4b and C3b in the presence of the cofactors C4-binding protein and factor H respectively. This chain is Complement factor I (CFI), found in Pongo abelii (Sumatran orangutan).